A 196-amino-acid chain; its full sequence is Pyridoxine/pyridoxamine 5'-phosphate oxidase (196 aa).

FMN-binding positions include 44 to 49, 59 to 60, arginine 65, lysine 66, and glutamine 88; these read RTVLLK and YT. Residue lysine 49 coordinates substrate. Residues tyrosine 106, arginine 110, and serine 114 each contribute to the substrate site. FMN-binding positions include 123–124 and tryptophan 169; that span reads QS. 175–177 is a binding site for substrate; sequence RLH. Residue arginine 179 coordinates FMN.

Belongs to the pyridoxamine 5'-phosphate oxidase family. As to quaternary structure, homodimer. FMN is required as a cofactor.

The catalysed reaction is pyridoxamine 5'-phosphate + O2 + H2O = pyridoxal 5'-phosphate + H2O2 + NH4(+). It carries out the reaction pyridoxine 5'-phosphate + O2 = pyridoxal 5'-phosphate + H2O2. It participates in cofactor metabolism; pyridoxal 5'-phosphate salvage; pyridoxal 5'-phosphate from pyridoxamine 5'-phosphate: step 1/1. Its pathway is cofactor metabolism; pyridoxal 5'-phosphate salvage; pyridoxal 5'-phosphate from pyridoxine 5'-phosphate: step 1/1. Functionally, catalyzes the oxidation of either pyridoxine 5'-phosphate (PNP) or pyridoxamine 5'-phosphate (PMP) into pyridoxal 5'-phosphate (PLP). The polypeptide is Pyridoxine/pyridoxamine 5'-phosphate oxidase (Alkalilimnicola ehrlichii (strain ATCC BAA-1101 / DSM 17681 / MLHE-1)).